The following is a 493-amino-acid chain: Sulfoacetaldehyde dehydrogenase (acylating) (493 aa).

Positions 1-10 are enriched in basic residues; sequence MSVQILHRRQ. The disordered stretch occupies residues 1 to 21; the sequence is MSVQILHRRQSNNSDLPLPTA. The Nucleophile role is filled by cysteine 273.

It belongs to the aldehyde dehydrogenase family. As to quaternary structure, homodimer.

The protein localises to the cytoplasm. The catalysed reaction is sulfoacetaldehyde + NADP(+) + CoA = sulfoacetyl-CoA + NADPH + H(+). Its function is as follows. Involved in the degradation of sulfoacetate, a widespread natural product. Catalyzes the conversion of sulfoacetyl-CoA and NADPH to sulfoacetaldehyde, CoA and NADP(+). Specific for NADP(+) and sulfoacetaldehyde. The protein is Sulfoacetaldehyde dehydrogenase (acylating) of Cupriavidus necator (strain ATCC 17699 / DSM 428 / KCTC 22496 / NCIMB 10442 / H16 / Stanier 337) (Ralstonia eutropha).